The chain runs to 785 residues: Hyperosmolality-gated Ca2+ permeable channel 1.7 (785 aa).

The chain crosses the membrane as a helical span at residues 7 to 27; it reads IGLSAAINLLSAFAFLFAFAM. Ser-54 carries the phosphoserine modification. A run of 9 helical transmembrane segments spans residues 101 to 121, 156 to 176, 373 to 393, 425 to 445, 465 to 485, 510 to 530, 582 to 602, 628 to 648, and 651 to 671; these read IYLL…GVLV, FWAH…ILYM, LLTT…IAFV, FLPG…LMTM, YFWF…TAFQ, ATFF…AEIL, AVAP…YVVF, LIIC…TKKF, and VTAL…YCAG. The interval 725–761 is disordered; that stretch reads VDEEESNPLVRTKRTSQGTTRYNSEASSSATTTPVAN. Polar residues predominate over residues 739–761; it reads TSQGTTRYNSEASSSATTTPVAN.

This sequence belongs to the CSC1 (TC 1.A.17) family. Post-translationally, phosphorylated and activated by BIK1.

It localises to the membrane. The enzyme catalyses Ca(2+)(in) = Ca(2+)(out). Calcium-permeable channel involved in plant stomatal immunity. The chain is Hyperosmolality-gated Ca2+ permeable channel 1.7 from Arabidopsis thaliana (Mouse-ear cress).